The chain runs to 578 residues: Lysine--tRNA ligase (578 aa).

Glu-414 and Glu-421 together coordinate Mg(2+).

Belongs to the class-II aminoacyl-tRNA synthetase family. As to quaternary structure, homodimer. The cofactor is Mg(2+).

The protein resides in the cytoplasm. The enzyme catalyses tRNA(Lys) + L-lysine + ATP = L-lysyl-tRNA(Lys) + AMP + diphosphate. This chain is Lysine--tRNA ligase, found in Porphyromonas gingivalis (strain ATCC BAA-308 / W83).